A 226-amino-acid polypeptide reads, in one-letter code: Uracil-DNA glycosylase (226 aa).

The Proton acceptor role is filled by Asp64.

It belongs to the uracil-DNA glycosylase (UDG) superfamily. UNG family.

The protein resides in the cytoplasm. It carries out the reaction Hydrolyzes single-stranded DNA or mismatched double-stranded DNA and polynucleotides, releasing free uracil.. Its function is as follows. Excises uracil residues from the DNA which can arise as a result of misincorporation of dUMP residues by DNA polymerase or due to deamination of cytosine. The protein is Uracil-DNA glycosylase of Vibrio parahaemolyticus serotype O3:K6 (strain RIMD 2210633).